Consider the following 251-residue polypeptide: 2,3-bisphosphoglycerate-dependent phosphoglycerate mutase (251 aa).

Residues 11-18 (RHGNSDWN), 24-25 (TG), arginine 63, 90-93 (ERHY), lysine 101, 117-118 (RR), and 185-186 (GN) contribute to the substrate site. Histidine 12 functions as the Tele-phosphohistidine intermediate in the catalytic mechanism. The active-site Proton donor/acceptor is glutamate 90. The segment at 117 to 142 (RRSFDVPPPPIDDDDEYSQSRDPRYA) is disordered.

The protein belongs to the phosphoglycerate mutase family. BPG-dependent PGAM subfamily.

The catalysed reaction is (2R)-2-phosphoglycerate = (2R)-3-phosphoglycerate. It participates in carbohydrate degradation; glycolysis; pyruvate from D-glyceraldehyde 3-phosphate: step 3/5. Functionally, catalyzes the interconversion of 2-phosphoglycerate and 3-phosphoglycerate. In Clavibacter michiganensis subsp. michiganensis (strain NCPPB 382), this protein is 2,3-bisphosphoglycerate-dependent phosphoglycerate mutase.